The primary structure comprises 289 residues: Dermonecrotic toxin LarSicTox-betaID1 (289 aa).

An N-terminal signal peptide occupies residues 1–2 (EG). The propeptide occupies 3–11 (AEQDGSERT). His22 is an active-site residue. Mg(2+)-binding residues include Glu42 and Asp44. The active-site Nucleophile is the His58. Intrachain disulfides connect Cys62–Cys68 and Cys64–Cys207. Asp102 contributes to the Mg(2+) binding site.

It belongs to the arthropod phospholipase D family. Class II subfamily. Mg(2+) serves as cofactor. As to expression, expressed by the venom gland.

Its subcellular location is the secreted. The enzyme catalyses an N-(acyl)-sphingosylphosphocholine = an N-(acyl)-sphingosyl-1,3-cyclic phosphate + choline. It catalyses the reaction N-hexanoyl-sphing-4-enine-1-phosphocholine = N-(hexanoyl)-sphing-4-enine-1,3-cyclic phosphate + choline. It carries out the reaction N-(dodecanoyl)-sphing-4-enine-1-phosphocholine = N-dodecanoyl-sphing-4-enine-1,3-cyclic phosphate + choline. The catalysed reaction is an N-(acyl)-sphingosylphosphoethanolamine = an N-(acyl)-sphingosyl-1,3-cyclic phosphate + ethanolamine. The enzyme catalyses N-dodecanoyl-heptadecasphing-4-enine-1-phosphoethanolamine = N-dodecanoyl-heptadecasphing-4-enine-1,3-cyclic phosphate + ethanolamine. It catalyses the reaction a 1-acyl-sn-glycero-3-phosphocholine = a 1-acyl-sn-glycero-2,3-cyclic phosphate + choline. It carries out the reaction 1-tetradecanoyl-sn-glycero-3-phosphocholine = 1-tetradecanoyl-sn-glycero-2,3-cyclic phosphate + choline. The catalysed reaction is 1-octanoyl-sn-glycero-3-phosphocholine = 1-octanoyl-sn-glycero-2,3-cyclic phosphate + choline. The enzyme catalyses a 1-acyl-sn-glycero-3-phosphoethanolamine = a 1-acyl-sn-glycero-2,3-cyclic phosphate + ethanolamine. It catalyses the reaction 1-tetradecanoyl-sn-glycero-3-phosphoethanolamine = 1-tetradecanoyl-sn-glycero-2,3-cyclic phosphate + ethanolamine. Functionally, dermonecrotic toxins cleave the phosphodiester linkage between the phosphate and headgroup of certain phospholipids (sphingolipid and lysolipid substrates), forming an alcohol (often choline) and a cyclic phosphate. This toxin acts on sphingomyelin (SM) and on ceramide phosphoethanolamine (CPE) with high activity. It also acts on lysophosphatidylcholine (LPC) and on lysophosphatidylethanolamine (LPE) with moderate activity. It is not active on lysophosphatidylserine (LPS), and lysophosphatidylglycerol (LPG). It acts by transphosphatidylation, releasing exclusively cyclic phosphate as second products. It is not surprising that spider toxins have affinity for ethanolamine-containing sphingolipids since they are common in insect prey. On mammals, induces dermonecrosis, hemolysis, increased vascular permeability, edema, inflammatory response, and platelet aggregation. The protein is Dermonecrotic toxin LarSicTox-betaID1 of Loxosceles arizonica (Arizona brown spider).